The chain runs to 95 residues: Integration host factor subunit beta (95 aa).

Belongs to the bacterial histone-like protein family. Heterodimer of an alpha and a beta chain.

Its function is as follows. This protein is one of the two subunits of integration host factor, a specific DNA-binding protein that functions in genetic recombination as well as in transcriptional and translational control. The chain is Integration host factor subunit beta from Psychromonas ingrahamii (strain DSM 17664 / CCUG 51855 / 37).